The primary structure comprises 242 residues: Uridylate kinase (242 aa).

Lysine 15 to glycine 18 contacts ATP. Glycine 57 serves as a coordination point for UMP. Positions 58 and 62 each coordinate ATP. UMP contacts are provided by residues aspartate 78 and threonine 139–threonine 146. 3 residues coordinate ATP: threonine 166, tyrosine 172, and aspartate 175.

It belongs to the UMP kinase family. Homohexamer.

It is found in the cytoplasm. It carries out the reaction UMP + ATP = UDP + ADP. The protein operates within pyrimidine metabolism; CTP biosynthesis via de novo pathway; UDP from UMP (UMPK route): step 1/1. Inhibited by UTP. Its function is as follows. Catalyzes the reversible phosphorylation of UMP to UDP. The protein is Uridylate kinase of Acinetobacter baylyi (strain ATCC 33305 / BD413 / ADP1).